A 214-amino-acid chain; its full sequence is Pyridoxine/pyridoxamine 5'-phosphate oxidase (214 aa).

Substrate-binding positions include arginine 9 to tyrosine 12 and lysine 67. FMN-binding positions include arginine 62–lysine 67, phenylalanine 77–threonine 78, lysine 84, and glutamine 106. Residues tyrosine 124, arginine 128, and serine 132 each coordinate substrate. FMN-binding positions include glutamine 141–serine 142 and tryptophan 186. Arginine 192–histidine 194 is a substrate binding site. Arginine 196 serves as a coordination point for FMN.

It belongs to the pyridoxamine 5'-phosphate oxidase family. As to quaternary structure, homodimer. Requires FMN as cofactor.

The enzyme catalyses pyridoxamine 5'-phosphate + O2 + H2O = pyridoxal 5'-phosphate + H2O2 + NH4(+). The catalysed reaction is pyridoxine 5'-phosphate + O2 = pyridoxal 5'-phosphate + H2O2. It participates in cofactor metabolism; pyridoxal 5'-phosphate salvage; pyridoxal 5'-phosphate from pyridoxamine 5'-phosphate: step 1/1. Its pathway is cofactor metabolism; pyridoxal 5'-phosphate salvage; pyridoxal 5'-phosphate from pyridoxine 5'-phosphate: step 1/1. Its function is as follows. Catalyzes the oxidation of either pyridoxine 5'-phosphate (PNP) or pyridoxamine 5'-phosphate (PMP) into pyridoxal 5'-phosphate (PLP). The sequence is that of Pyridoxine/pyridoxamine 5'-phosphate oxidase from Microcystis aeruginosa (strain NIES-843 / IAM M-2473).